The chain runs to 351 residues: Phosphoribosylformylglycinamidine cyclo-ligase (351 aa).

This sequence belongs to the AIR synthase family.

The protein resides in the cytoplasm. The enzyme catalyses 2-formamido-N(1)-(5-O-phospho-beta-D-ribosyl)acetamidine + ATP = 5-amino-1-(5-phospho-beta-D-ribosyl)imidazole + ADP + phosphate + H(+). Its pathway is purine metabolism; IMP biosynthesis via de novo pathway; 5-amino-1-(5-phospho-D-ribosyl)imidazole from N(2)-formyl-N(1)-(5-phospho-D-ribosyl)glycinamide: step 2/2. This chain is Phosphoribosylformylglycinamidine cyclo-ligase, found in Xylella fastidiosa (strain Temecula1 / ATCC 700964).